The following is a 338-amino-acid chain: Lipoate-protein ligase A (338 aa).

A BPL/LPL catalytic domain is found at 29–216 (SPDQRVLFLW…AFFNYYDEKV (188 aa)). ATP is bound by residues arginine 71, 76 to 79 (GAVF), and lysine 134. Position 134 (lysine 134) interacts with (R)-lipoate.

This sequence belongs to the LplA family. Monomer.

It is found in the cytoplasm. It carries out the reaction L-lysyl-[lipoyl-carrier protein] + (R)-lipoate + ATP = N(6)-[(R)-lipoyl]-L-lysyl-[lipoyl-carrier protein] + AMP + diphosphate + H(+). The protein operates within protein modification; protein lipoylation via exogenous pathway; protein N(6)-(lipoyl)lysine from lipoate: step 1/2. Its pathway is protein modification; protein lipoylation via exogenous pathway; protein N(6)-(lipoyl)lysine from lipoate: step 2/2. Catalyzes both the ATP-dependent activation of exogenously supplied lipoate to lipoyl-AMP and the transfer of the activated lipoyl onto the lipoyl domains of lipoate-dependent enzymes. This is Lipoate-protein ligase A from Yersinia enterocolitica serotype O:8 / biotype 1B (strain NCTC 13174 / 8081).